A 648-amino-acid chain; its full sequence is Probable alpha-galactosidase D (648 aa).

An N-terminal signal peptide occupies residues 1–16; it reads MEFIVSLLLLSPALVA. Residues Asn-84 and Asn-90 are each glycosylated (N-linked (GlcNAc...) asparagine). Cys-123 and Cys-156 are disulfide-bonded. Catalysis depends on Asp-154, which acts as the Nucleophile. 199–203 serves as a coordination point for substrate; sequence EWGID. Residue Asp-221 is the Proton donor of the active site. N-linked (GlcNAc...) asparagine glycosylation is found at Asn-339, Asn-350, Asn-505, and Asn-572.

This sequence belongs to the glycosyl hydrolase 27 family.

Its subcellular location is the secreted. It carries out the reaction Hydrolysis of terminal, non-reducing alpha-D-galactose residues in alpha-D-galactosides, including galactose oligosaccharides, galactomannans and galactolipids.. Functionally, hydrolyzes a variety of simple alpha-D-galactoside as well as more complex molecules such as oligosaccharides and polysaccharides. The sequence is that of Probable alpha-galactosidase D (aglD) from Aspergillus fumigatus (strain CBS 144.89 / FGSC A1163 / CEA10) (Neosartorya fumigata).